The chain runs to 1211 residues: A disintegrin and metalloproteinase with thrombospondin motifs 2 (1211 aa).

Residues 1-29 (MDPPAGAARRLLCPALLLLLLLLPPPLLP) form the signal peptide. Positions 30 to 253 (PPPPPANARL…GVLEEHANSS (224 aa)) are excised as a propeptide. 2 N-linked (GlcNAc...) asparagine glycosylation sites follow: Asn-112 and Asn-251. The 205-residue stretch at 266-470 (YNIEVLLGVD…HSYDCLLDDP (205 aa)) folds into the Peptidase M12B domain. Intrachain disulfides connect Cys-343–Cys-392, Cys-386–Cys-465, Cys-425–Cys-451, Cys-492–Cys-517, Cys-503–Cys-526, Cys-512–Cys-545, Cys-539–Cys-550, Cys-573–Cys-610, Cys-577–Cys-615, and Cys-588–Cys-600. His-408 lines the Zn(2+) pocket. Glu-409 is a catalytic residue. Zn(2+) contacts are provided by His-412 and His-418. Positions 480–560 (QLPGLHYSMN…IWLTPDILKR (81 aa)) constitute a Disintegrin domain. A TSP type-1 1 domain is found at 561–616 (DGSWGAWSPFGSCSRTCGTGVKFRTRQCDNPHPANGGRTCSGLAYDFQLCSRQDCP). The Cell attachment site signature appears at 691–693 (RGD). Positions 723–851 (KVVKGTFTRS…NVDDNNVLEE (129 aa)) are spacer. 3 TSP type-1 domains span residues 854–912 (VVYE…NPQE), 914–971 (SQPV…RACS), and 975–1029 (CPGR…GPCP). N-linked (GlcNAc...) asparagine glycosylation is found at Asn-949 and Asn-993. Intrachain disulfides connect Cys-987/Cys-1023, Cys-991/Cys-1028, and Cys-1002/Cys-1012. The N-linked (GlcNAc...) asparagine glycan is linked to Asn-1031. One can recognise a PLAC domain in the interval 1059 to 1097 (SKGHCQGDKSIFCRMEVLSRYCSIPGYNKLCCKSCNLYN). N-linked (GlcNAc...) asparagine glycosylation is found at Asn-1098, Asn-1145, and Asn-1150. The segment at 1170–1191 (LEDEVQPPNLIPRRPSPYEKTR) is disordered.

May belong to a multimeric complex. Binds specifically to collagen type XIV. Requires Zn(2+) as cofactor. In terms of processing, the precursor is cleaved by a furin endopeptidase. Post-translationally, glycosylated. Can be O-fucosylated by POFUT2 on a serine or a threonine residue found within the consensus sequence C1-X(2)-(S/T)-C2-G of the TSP type-1 repeat domains where C1 and C2 are the first and second cysteine residue of the repeat, respectively. Fucosylated repeats can then be further glycosylated by the addition of a beta-1,3-glucose residue by the glucosyltransferase, B3GALTL. Fucosylation mediates the efficient secretion of ADAMTS family members. Can also be C-glycosylated with one or two mannose molecules on tryptophan residues within the consensus sequence W-X-X-W of the TPRs, and N-glycosylated. These other glycosylations can also facilitate secretion. Expressed at high level in skin, bone, tendon and aorta and at low levels in thymus and brain.

Its subcellular location is the secreted. It is found in the extracellular space. The protein localises to the extracellular matrix. The enzyme catalyses Cleaves the N-propeptide of collagen chain alpha1(I) at Pro-|-Gln and of alpha1(II) and alpha2(I) at Ala-|-Gln.. Cleaves the propeptides of type I and II collagen prior to fibril assembly. Does not act on type III collagen. Cleaves lysyl oxidase LOX at a site downstream of its propeptide cleavage site to produce a short LOX form with reduced collagen-binding activity. The protein is A disintegrin and metalloproteinase with thrombospondin motifs 2 (ADAMTS2) of Homo sapiens (Human).